We begin with the raw amino-acid sequence, 168 residues long: MTQLIMGIDPGTLVSGYAIIHIEQRYKIRAHSYGAIRLSSKDSLTQRYKQLFQTLSGVLDDITPDAVVLETQYVHKNPQSTIKLGMARGVLILAAALRDIPVFEYAPNVAKRAVVGKGNASKQQVQLMVSKILNIPDVLNSNCEDIADAFALAICHAHTSAYTCLGVR.

Residues aspartate 9, glutamate 70, and aspartate 145 contribute to the active site. 3 residues coordinate Mg(2+): aspartate 9, glutamate 70, and aspartate 145.

This sequence belongs to the RuvC family. As to quaternary structure, homodimer which binds Holliday junction (HJ) DNA. The HJ becomes 2-fold symmetrical on binding to RuvC with unstacked arms; it has a different conformation from HJ DNA in complex with RuvA. In the full resolvosome a probable DNA-RuvA(4)-RuvB(12)-RuvC(2) complex forms which resolves the HJ. Requires Mg(2+) as cofactor.

It localises to the cytoplasm. It carries out the reaction Endonucleolytic cleavage at a junction such as a reciprocal single-stranded crossover between two homologous DNA duplexes (Holliday junction).. The RuvA-RuvB-RuvC complex processes Holliday junction (HJ) DNA during genetic recombination and DNA repair. Endonuclease that resolves HJ intermediates. Cleaves cruciform DNA by making single-stranded nicks across the HJ at symmetrical positions within the homologous arms, yielding a 5'-phosphate and a 3'-hydroxyl group; requires a central core of homology in the junction. The consensus cleavage sequence is 5'-(A/T)TT(C/G)-3'. Cleavage occurs on the 3'-side of the TT dinucleotide at the point of strand exchange. HJ branch migration catalyzed by RuvA-RuvB allows RuvC to scan DNA until it finds its consensus sequence, where it cleaves and resolves the cruciform DNA. In Chlamydia caviae (strain ATCC VR-813 / DSM 19441 / 03DC25 / GPIC) (Chlamydophila caviae), this protein is Crossover junction endodeoxyribonuclease RuvC.